We begin with the raw amino-acid sequence, 1052 residues long: Kinesin-like protein KIF11 (1052 aa).

Residues 17 to 358 (NIQVVVRCRP…LEYAHRAKNI (342 aa)) enclose the Kinesin motor domain. An ATP-binding site is contributed by 104–111 (GQTGTGKT). Position 145 is an N6-acetyllysine (Lys145). The stretch at 364–478 (VNQKLTKKAL…ETKLQLVKEE (115 aa)) forms a coiled coil. A Phosphothreonine modification is found at Thr457. Residue Lys476 forms a Glycyl lysine isopeptide (Lys-Gly) (interchain with G-Cter in SUMO2) linkage. Phosphothreonine is present on Thr925. Disordered regions lie at residues 950–1026 (LQKK…LNPV) and 1033–1052 (EASD…SINL). Positions 963-988 (EASKETSQDMDEEREALEQCTEELVS) form a coiled coil. The span at 1016–1026 (KDKENRGLNPV) shows a compositional bias: basic and acidic residues.

It belongs to the TRAFAC class myosin-kinesin ATPase superfamily. Kinesin family. BimC subfamily. As to quaternary structure, interacts with the thyroid hormone receptor in the presence of thyroid hormone. Component of a large chromatin remodeling complex, at least composed of MYSM1, PCAF, RBM10 and KIF11/TRIP5. Interacts with RARRES1 and AGBL2. Phosphorylated exclusively on serine during S phase, but on both serine and Thr-925 during mitosis, so controlling the association of KIF11 with the spindle apparatus (probably during early prophase).

It is found in the cytoplasm. It localises to the cytoskeleton. Its subcellular location is the spindle pole. Its function is as follows. Motor protein required for establishing a bipolar spindle during mitosis. Required in non-mitotic cells for transport of secretory proteins from the Golgi complex to the cell surface. The polypeptide is Kinesin-like protein KIF11 (Kif11) (Mus musculus (Mouse)).